A 116-amino-acid polypeptide reads, in one-letter code: Large ribosomal subunit protein eL30 (116 aa).

It belongs to the eukaryotic ribosomal protein eL30 family. As to quaternary structure, component of the large ribosomal subunit.

The protein resides in the cytoplasm. Component of the large ribosomal subunit. The ribosome is a large ribonucleoprotein complex responsible for the synthesis of proteins in the cell. This Ictalurus punctatus (Channel catfish) protein is Large ribosomal subunit protein eL30 (rpl30).